We begin with the raw amino-acid sequence, 398 residues long: Cysteine desulfurase (398 aa).

Pyridoxal 5'-phosphate is bound by residues 74–75 (GT), N155, Q182, and 202–204 (CGH). The residue at position 205 (K205) is an N6-(pyridoxal phosphate)lysine. The span at 230 to 244 (GHQERSRRAGNGERA) shows a compositional bias: basic and acidic residues. The tract at residues 230-253 (GHQERSRRAGNGERAGHRRAGGGA) is disordered. C327 serves as the catalytic Cysteine persulfide intermediate. C327 contributes to the [2Fe-2S] cluster binding site.

This sequence belongs to the class-V pyridoxal-phosphate-dependent aminotransferase family. NifS/IscS subfamily. As to quaternary structure, homodimer. It depends on pyridoxal 5'-phosphate as a cofactor.

The enzyme catalyses (sulfur carrier)-H + L-cysteine = (sulfur carrier)-SH + L-alanine. Its function is as follows. Catalyzes the removal of elemental sulfur atoms from cysteine to produce alanine. Seems to participate in the biosynthesis of the nitrogenase metalloclusters by providing the inorganic sulfur required for the Fe-S core formation. The sequence is that of Cysteine desulfurase from Azospirillum brasilense.